A 310-amino-acid polypeptide reads, in one-letter code: Acetyl-coenzyme A carboxylase carboxyl transferase subunit alpha (310 aa).

One can recognise a CoA carboxyltransferase C-terminal domain in the interval 36–286; the sequence is NLEKEITKTY…GEYILKQLDE (251 aa).

The protein belongs to the AccA family. Acetyl-CoA carboxylase is a heterohexamer composed of biotin carboxyl carrier protein (AccB), biotin carboxylase (AccC) and two subunits each of ACCase subunit alpha (AccA) and ACCase subunit beta (AccD).

It localises to the cytoplasm. It carries out the reaction N(6)-carboxybiotinyl-L-lysyl-[protein] + acetyl-CoA = N(6)-biotinyl-L-lysyl-[protein] + malonyl-CoA. The protein operates within lipid metabolism; malonyl-CoA biosynthesis; malonyl-CoA from acetyl-CoA: step 1/1. Functionally, component of the acetyl coenzyme A carboxylase (ACC) complex. First, biotin carboxylase catalyzes the carboxylation of biotin on its carrier protein (BCCP) and then the CO(2) group is transferred by the carboxyltransferase to acetyl-CoA to form malonyl-CoA. This chain is Acetyl-coenzyme A carboxylase carboxyl transferase subunit alpha, found in Campylobacter fetus subsp. fetus (strain 82-40).